Reading from the N-terminus, the 179-residue chain is Inner membrane-spanning protein YciB (179 aa).

5 consecutive transmembrane segments (helical) span residues 22–42 (IYAATSALIVATAIVLIYSWV), 50–70 (MALITFVLVAVFGGLTLFFHN), 76–96 (WKVTVIYALFAGALLISQWVM), 121–141 (LAWALFFIACGLANIYIAFWL), and 149–169 (FKVFGLTALTLIFTLLSGVYI).

Belongs to the YciB family.

Its subcellular location is the cell inner membrane. Plays a role in cell envelope biogenesis, maintenance of cell envelope integrity and membrane homeostasis. The polypeptide is Inner membrane-spanning protein YciB (Salmonella agona (strain SL483)).